Here is a 312-residue protein sequence, read N- to C-terminus: Molybdenum cofactor biosynthesis bifunctional protein (312 aa).

The interval 1–155 (MEFTHLDENG…GGKSSAAEYH (155 aa)) is molybdenum cofactor biosynthesis protein C. Substrate is bound by residues 74 to 76 (LCH) and 110 to 111 (ME). Residue aspartate 125 is part of the active site. A molybdenum cofactor biosynthesis protein B region spans residues 156-312 (PRTAILVMSD…FPMLKGDGHA (157 aa)).

In the N-terminal section; belongs to the MoaC family. The protein in the C-terminal section; belongs to the MoaB/Mog family.

It catalyses the reaction (8S)-3',8-cyclo-7,8-dihydroguanosine 5'-triphosphate = cyclic pyranopterin phosphate + diphosphate. Its pathway is cofactor biosynthesis; molybdopterin biosynthesis. Catalyzes the conversion of (8S)-3',8-cyclo-7,8-dihydroguanosine 5'-triphosphate to cyclic pyranopterin monophosphate (cPMP). The sequence is that of Molybdenum cofactor biosynthesis bifunctional protein (moaCB) from Chlorobaculum tepidum (strain ATCC 49652 / DSM 12025 / NBRC 103806 / TLS) (Chlorobium tepidum).